Consider the following 151-residue polypeptide: UPF0756 membrane protein GWCH70_2680 (151 aa).

A run of 4 helical transmembrane segments spans residues 5–25 (ILFL…SLMI), 53–73 (WGVT…EIGF), 86–106 (WIAL…VTLL), and 116–136 (LVFG…GPLI).

Belongs to the UPF0756 family.

It is found in the cell membrane. The sequence is that of UPF0756 membrane protein GWCH70_2680 from Geobacillus sp. (strain WCH70).